Consider the following 171-residue polypeptide: MPLLDSFTVDHTRMEAPAVRVAKTMNTPHGDAITVFDLRFCVPNKEVMPERGSHTLEHLFAGFMRNHLNGNGVEIIDISPMGCRTGFYMSLIGTPDEQRVADAWKAAMEDVLKVQDQNQIPELNVYQCGTYQMHSLQEAQDIARSILERDVRINSNEELALPKEKLQELHI.

Fe cation-binding residues include H54, H58, and C128.

The protein belongs to the LuxS family. As to quaternary structure, homodimer. Fe cation is required as a cofactor.

It carries out the reaction S-(5-deoxy-D-ribos-5-yl)-L-homocysteine = (S)-4,5-dihydroxypentane-2,3-dione + L-homocysteine. Involved in the synthesis of autoinducer 2 (AI-2) which is secreted by bacteria and is used to communicate both the cell density and the metabolic potential of the environment. The regulation of gene expression in response to changes in cell density is called quorum sensing. Catalyzes the transformation of S-ribosylhomocysteine (RHC) to homocysteine (HC) and 4,5-dihydroxy-2,3-pentadione (DPD). The chain is S-ribosylhomocysteine lyase from Shigella boydii serotype 4 (strain Sb227).